The following is a 160-amino-acid chain: Large ribosomal subunit protein eL21 (160 aa).

Composition is skewed to basic and acidic residues over residues 112 to 123 (NDQKKKEAKEKG) and 136 to 145 (REAHFVRTNG). The segment at 112 to 145 (NDQKKKEAKEKGTWVQLKRQPAPPREAHFVRTNG) is disordered.

It belongs to the eukaryotic ribosomal protein eL21 family. In terms of assembly, component of the large ribosomal subunit.

It localises to the cytoplasm. It is found in the cytosol. Its subcellular location is the endoplasmic reticulum. Functionally, component of the large ribosomal subunit. The ribosome is a large ribonucleoprotein complex responsible for the synthesis of proteins in the cell. This chain is Large ribosomal subunit protein eL21, found in Mus musculus (Mouse).